The chain runs to 315 residues: Salivary protein SG34 (315 aa).

Positions 1 to 20 (MPVSYDFVILLALFIVLARS) are cleaved as a signal peptide. Residues 98–161 (NAEVELLRES…QEEIEQQTKQ (64 aa)) are a coiled coil.

Functionally, (Microbial infection) Modulates replication of duck Tembusu virus in salivary glands and virus release into the saliva, probably via the regulation of antimicrobial peptides expression in response to duck Tembusu virus infection. This Aedes albopictus (Asian tiger mosquito) protein is Salivary protein SG34.